The following is a 295-amino-acid chain: MANLKEIKRKISSVKNTQKTTNAMKLVSSAKLKRTEELAKRSRVYAAKLTELIEEIAQKMQHASAEGLDNIFFQENNNPKKVDIIFITADKGLCGGFNSQTIKRTSQMIAEYQSKGAKVRLRAIGRKGIDYFKFNNVELDDAIVGLSAAPDYKQSSEFISEVVTSYVNGDTDRIVLVHNGYVNMITQEIREDQILPVDASQLELSTVSTSEMEVEPDDDDTLLDALVKRYVEYSIYYALIDSLAAEHSARMQAMDAATKNAKEMVKDLNVKYNKARQEAITTELIEIISGMESMK.

This sequence belongs to the ATPase gamma chain family. In terms of assembly, F-type ATPases have 2 components, CF(1) - the catalytic core - and CF(0) - the membrane proton channel. CF(1) has five subunits: alpha(3), beta(3), gamma(1), delta(1), epsilon(1). CF(0) has three main subunits: a, b and c.

The protein resides in the cell inner membrane. Produces ATP from ADP in the presence of a proton gradient across the membrane. The gamma chain is believed to be important in regulating ATPase activity and the flow of protons through the CF(0) complex. The sequence is that of ATP synthase gamma chain from Sulfurovum sp. (strain NBC37-1).